Consider the following 240-residue polypeptide: Ribonuclease HII (240 aa).

An RNase H type-2 domain is found at Arg31 to Ala222. Residues Asp37, Glu38, and Asp130 each contribute to the a divalent metal cation site.

The protein belongs to the RNase HII family. Requires Mn(2+) as cofactor. It depends on Mg(2+) as a cofactor.

The protein localises to the cytoplasm. It carries out the reaction Endonucleolytic cleavage to 5'-phosphomonoester.. Functionally, endonuclease that specifically degrades the RNA of RNA-DNA hybrids. In Xanthomonas campestris pv. campestris (strain B100), this protein is Ribonuclease HII.